The sequence spans 289 residues: ATP synthase gamma chain (289 aa).

This sequence belongs to the ATPase gamma chain family. In terms of assembly, F-type ATPases have 2 components, CF(1) - the catalytic core - and CF(0) - the membrane proton channel. CF(1) has five subunits: alpha(3), beta(3), gamma(1), delta(1), epsilon(1). CF(0) has three main subunits: a, b and c.

It is found in the cell membrane. Its function is as follows. Produces ATP from ADP in the presence of a proton gradient across the membrane. The gamma chain is believed to be important in regulating ATPase activity and the flow of protons through the CF(0) complex. The sequence is that of ATP synthase gamma chain from Hamiltonella defensa subsp. Acyrthosiphon pisum (strain 5AT).